Consider the following 88-residue polypeptide: Translation initiation factor IF-1 1 (88 aa).

Residues 1 to 72 (MAKEELIELD…TKGRINFRHK (72 aa)) form the S1-like domain.

It belongs to the IF-1 family. Component of the 30S ribosomal translation pre-initiation complex which assembles on the 30S ribosome in the order IF-2 and IF-3, IF-1 and N-formylmethionyl-tRNA(fMet); mRNA recruitment can occur at any time during PIC assembly.

The protein resides in the cytoplasm. In terms of biological role, one of the essential components for the initiation of protein synthesis. Stabilizes the binding of IF-2 and IF-3 on the 30S subunit to which N-formylmethionyl-tRNA(fMet) subsequently binds. Helps modulate mRNA selection, yielding the 30S pre-initiation complex (PIC). Upon addition of the 50S ribosomal subunit IF-1, IF-2 and IF-3 are released leaving the mature 70S translation initiation complex. This Burkholderia mallei (strain ATCC 23344) protein is Translation initiation factor IF-1 1.